A 250-amino-acid chain; its full sequence is Cruxrhodopsin-1 (250 aa).

The Extracellular segment spans residues 1-9; sequence MPEPGSEAI. The chain crosses the membrane as a helical span at residues 10-27; the sequence is WLWLGTAGMFLGMLYFIA. Residues 28-41 lie on the Cytoplasmic side of the membrane; sequence RGWGETDSRRQKFY. The helical transmembrane segment at 42–60 threads the bilayer; that stretch reads IATILITAIAFVNYLAMAL. Residues 61–77 lie on the Extracellular side of the membrane; sequence GFGLTIVEFAGEEHPIY. A helical membrane pass occupies residues 78–94; sequence WARYSDWLFTTPLLLYD. Over 95 to 105 the chain is Cytoplasmic; sequence LGLLAGADRNT. Residues 106–125 form a helical membrane-spanning segment; the sequence is ITSLVSLDVLMIGTGLVATL. Topologically, residues 126 to 138 are extracellular; it reads SPGSGVLSAGAER. The chain crosses the membrane as a helical span at residues 139 to 158; it reads LVWWGISTAFLLVLLYFLFS. Residues 159–176 lie on the Cytoplasmic side of the membrane; sequence SLSGRVADLPSDTRSTFK. A helical transmembrane segment spans residues 177 to 195; the sequence is TLRNLVTVVWLVYPVWWLI. Over 196–207 the chain is Extracellular; it reads GTEGIGLVGIGI. The helical transmembrane segment at 208–227 threads the bilayer; the sequence is ETAGFMVIDLTAKVGFGIIL. N6-(retinylidene)lysine is present on Lys-220. Over 228–250 the chain is Cytoplasmic; the sequence is LRSHGVLDGAAETTGTGATPADD.

The protein belongs to the archaeal/bacterial/fungal opsin family. In terms of assembly, homotrimer.

It is found in the cell membrane. Its function is as follows. Light-driven proton pump. This Haloarcula argentinensis protein is Cruxrhodopsin-1 (cop1).